We begin with the raw amino-acid sequence, 376 residues long: Inactive CLIP domain-containing serine protease A28 (376 aa).

The signal sequence occupies residues 1–19 (MKVLLFCIVISLTTLIASG). Residues 24 to 80 (EELRCPGGYCVSKYLCPNGTFIDDIKHAQTTQLIGLRAGLDIDDFDDCNDYLLVCCQ) form the Clip domain. 3 disulfides stabilise this stretch: Cys-28–Cys-78, Cys-33–Cys-71, and Cys-39–Cys-79. Residue Asn-41 is glycosylated (N-linked (GlcNAc...) asparagine). A disordered region spans residues 85–106 (PTATSTEKPATSDELIEPPPST). The Peptidase S1 domain occupies 114–364 (NEGGLIYDLR…YVQWLNEHIV (251 aa)). 2 N-linked (GlcNAc...) asparagine glycosylation sites follow: Asn-125 and Asn-279. Cystine bridges form between Cys-251-Cys-321, Cys-280-Cys-301, and Cys-311-Cys-340. Asn-369 is a glycosylation site (N-linked (GlcNAc...) asparagine).

It belongs to the peptidase S1 family. CLIP subfamily. In terms of assembly, may form a heterodimer of a light chain and a heavy chain; disulfide-linked. Post-translationally, secreted as a full-length protein. Proteolytically cleaved into two chains which probably remain covalently linked. Cleavage is induced by fungus B.bassiana and Gram-positive or Gram-negative bacteria infection.

It is found in the secreted. In terms of biological role, inactive serine protease which plays an essential role in the innate immune response against bacteria, fungi and protozoa infection by activating the melanization cascade. In the melanization cascade, acts downstream of TEP1, SPCLIP1 and CLIPA8 to promote CLIPC9 proteolytic cleavage. In the susceptible strain G3, appears to be dispensable for parasite P.berghei ookinete elimination which occurs by lysis. Required for the melanization of Gram-positive and Gram-negative bacteria. Required for the melanization of fungus B.bassiana. This chain is Inactive CLIP domain-containing serine protease A28, found in Anopheles gambiae (African malaria mosquito).